A 279-amino-acid chain; its full sequence is MLSRRGHRLSRFRKNKRRLRERLRQRIFFRDKVVPEAMEKPRVLVLTGAGISAESGIRTFRAADGLWEEHRVEDVATPEGFDRDPELVQAFYNARRRQLQQPEIQPNAAHLALAKLQDALGDRFLLVTQNIDNLHERAGNTNVIHMHGELLKVRCSQSGQVLDWTGDVTPEDKCHCCQFPAPLRPHVVWFGEMPLGMDEIYMALSMADIFIAIGTSGHVYPAAGFVHEAKLHGAHTVELNLEPSQVGNEFAEKYYGPASQVVPEFVEKLLKGLKAGSIA.

The Deacetylase sirtuin-type domain occupies 20 to 272 (RERLRQRIFF…PEFVEKLLKG (253 aa)). NAD(+) is bound at residue 48-67 (GAGISAESGIRTFRAADGLW). 2 residues coordinate substrate: Tyr-92 and Arg-95. 129-132 (QNID) contributes to the NAD(+) binding site. The Proton acceptor role is filled by His-147. 2 residues coordinate Zn(2+): Cys-155 and Cys-174. NAD(+) contacts are provided by residues 214–216 (GTS), 240–242 (NLE), and Ala-258.

The protein belongs to the sirtuin family. Class III subfamily. As to quaternary structure, forms a 1:1 complex with acetyl-CoA synthetase (Acs). It depends on Zn(2+) as a cofactor.

It localises to the cytoplasm. The catalysed reaction is N(6)-acetyl-L-lysyl-[protein] + NAD(+) + H2O = 2''-O-acetyl-ADP-D-ribose + nicotinamide + L-lysyl-[protein]. It carries out the reaction N(6)-succinyl-L-lysyl-[protein] + NAD(+) + H2O = 2''-O-succinyl-ADP-D-ribose + nicotinamide + L-lysyl-[protein]. The enzyme catalyses N(6)-(2-hydroxyisobutanoyl)-L-lysyl-[protein] + NAD(+) + H2O = 2''-O-(2-hydroxyisobutanoyl)-ADP-D-ribose + nicotinamide + L-lysyl-[protein]. With respect to regulation, deacetylation is inhibited by nicotinamide. In terms of biological role, NAD-dependent lysine deacetylase that specifically removes acetyl groups on target proteins. Also acts as a protein-lysine deacylase by mediating protein desuccinylation and de-2-hydroxyisobutyrylation. Modulates the activities of several proteins which are inactive in their acylated form. Activates the enzyme acetyl-CoA synthetase (acs) by deacetylating 'Lys-609' in the inactive, acetylated form of the enzyme. May also modulate the activity of other propionyl-adenosine monophosphate (AMP)-forming enzymes. The protein is NAD-dependent protein deacylase of Escherichia coli (strain K12).